A 464-amino-acid polypeptide reads, in one-letter code: Cell division protein FtsA (464 aa).

The segment at 392-464 (EVIETDKDTE…FKKLMKSLFE (73 aa)) is disordered. Over residues 416–455 (KKENDEVAPEAPREESYEDRENHLEDEQQTEGKAKEESKF) the composition is skewed to basic and acidic residues.

Belongs to the FtsA/MreB family. In terms of assembly, self-interacts. Interacts with FtsZ.

Its subcellular location is the cell membrane. Cell division protein that is involved in the assembly of the Z ring. May serve as a membrane anchor for the Z ring. This Staphylococcus epidermidis (strain ATCC 12228 / FDA PCI 1200) protein is Cell division protein FtsA.